The sequence spans 186 residues: Hydra actinoporin-like toxin 1 (186 aa).

The first 18 residues, 1–18 (MLLYICLVNLLLPLSVGA), serve as a signal peptide directing secretion. The interval 29–48 (KVGVDAALQQIDDVWKGKTV) is N-terminal region. The Cell attachment site, crucial for protein stability motif lies at 158–160 (RAG).

It belongs to the actinoporin family. HALT subfamily. In terms of assembly, octamer or nonamer in membranes. Monomer in the soluble state. In vitro, interacts with folate receptor alpha (of target organism). As to expression, expressed female germline during oogenesis.

The protein localises to the nematocyst. The protein resides in the secreted. Its subcellular location is the target cell membrane. In terms of biological role, pore-forming protein that forms hydrophilic pores and causes cytolysis. Compared to equinatoxin-2 (AC P61914), it reveals lower cytolysis activity (5-12-fold difference, tested on erythrocytes), a larger pore size (probably 2-3 nm) and different affinity to membrane lipids (100-fold lower affinity to sphingomyelin). Binds to sulfatides (SFT) as well as to the two sphingolipids, lysophosphatidic acid (LPA) and sphingosine-1-phosphate (S1P). It seems to bind more strongly to LPA than to S1P and SFT. Shows cytolytic activity on HeLa cells, with a different potency than its paralogs (from most potent to less potent: HALT-4&gt;HALT-6~HALT-1&gt;HALT-3&gt;HALT-7&gt;HALT-2). Pore formation is a multi-step process that involves specific recognition of membrane lipid by a protein aromatic residues rich region, firm binding to the membrane (mainly driven by hydrophobic interactions) accompanied by the transfer of the N-terminal region to the lipid-water interface and finally pore formation after oligomerization of monomers. In vitro, binds to the folate receptor alpha (FOLR1), a GPI-anchored membrane protein that plays a major role in the uptake of folate/folic acid into cells via endocytosis, suggesting a possible involvement of this receptor in the mechanism of HALT-1-induced cell lysis. In vivo, does not cause visible paralysis in larvae of the blowfly Sarcophaga faculata, the most common arthropod prey of Hydra. The chain is Hydra actinoporin-like toxin 1 from Hydra vulgaris (Hydra).